Reading from the N-terminus, the 1243-residue chain is Membrane-associated phosphatidylinositol transfer protein 1 (1243 aa).

Phosphothreonine occurs at positions 59, 282, and 287. Residues 259–330 (CNTGSEGPEA…HGGGVSPQSL (72 aa)) form a disordered region. A compositionally biased stretch (polar residues) spans 271–283 (PGKSSTEARPGTS). Over residues 299–319 (ASPDASFGKQWSSSSRSSYSS) the composition is skewed to low complexity. 9 positions are modified to phosphoserine: Ser300, Ser304, Ser319, Ser326, Ser329, Ser342, Ser345, Ser346, and Ser373. Ser382 is subject to Phosphoserine; by CDK1. Over residues 581–593 (AGPGSRGSSRRGS) the composition is skewed to low complexity. Residues 581-679 (AGPGSRGSSR…PASSEAPDGP (99 aa)) form a disordered region. Residues Ser593, Ser600, and Ser621 each carry the phosphoserine modification. Polar residues predominate over residues 643–658 (GSQNSLQVASTATSSG). Positions 684–878 (RLDFKVSGFF…VVAFILRQVI (195 aa)) constitute a DDHD domain. Ser895 carries the phosphoserine modification. Residues 1206–1243 (LLRSRGPSQVDREGPGTPPTTLARGKTRSISLKLDSEE) are disordered. Arg1210 and Arg1217 each carry omega-N-methylarginine. Residue Ser1236 is modified to Phosphoserine.

It belongs to the PtdIns transfer protein family. PI transfer class IIA subfamily. Interacts with PTK2B via its C-terminus. Interacts with RHOA. Has higher affinity for the inactive, GDP-bound form of RHOA. The CDK1-phosphorylated form interacts with PLK1. Interacts with VAPB and PIK4CA. Phosphorylated on multiple sites by CDK1 at the onset of mitosis. Phosphorylation facilitates dissociation from the Golgi complex and is required for interaction with PLK1. Post-translationally, phosphorylated on threonine residues upon treatment with oleic acid. In terms of processing, phosphorylated on tyrosine residues by PTK2B. In terms of tissue distribution, detected at high levels in brain, and at lower levels in lung, kidney, spleen and liver (at protein level). Ubiquitous. Highly expressed in embryonic retina and the central nervous system.

Its subcellular location is the cytoplasm. The protein resides in the golgi apparatus. The protein localises to the golgi stack membrane. It is found in the endoplasmic reticulum membrane. It localises to the lipid droplet. Its subcellular location is the cleavage furrow. The protein resides in the midbody. The enzyme catalyses a 1,2-diacyl-sn-glycero-3-phospho-(1D-myo-inositol)(in) = a 1,2-diacyl-sn-glycero-3-phospho-(1D-myo-inositol)(out). Functionally, catalyzes the transfer of phosphatidylinositol (PI) between membranes. Binds PI. Also binds phosphatidylcholine (PC) and phosphatidic acid (PA) with the binding affinity order of PI &gt; PA &gt; PC. Regulates RHOA activity, and plays a role in cytoskeleton remodeling. Necessary for normal completion of cytokinesis. Plays a role in maintaining normal diacylglycerol levels in the Golgi apparatus. Necessary for maintaining the normal structure of the endoplasmic reticulum and the Golgi apparatus. Required for protein export from the endoplasmic reticulum and the Golgi. Binds calcium ions. In Mus musculus (Mouse), this protein is Membrane-associated phosphatidylinositol transfer protein 1 (Pitpnm1).